The primary structure comprises 27 residues: Caerulein precursor fragment R8 (27 aa).

In terms of tissue distribution, expressed by the skin glands.

It localises to the secreted. In terms of biological role, antimicrobial peptide. The chain is Caerulein precursor fragment R8 from Xenopus ruwenzoriensis (Uganda clawed frog).